The sequence spans 321 residues: tRNA-dihydrouridine synthase B (321 aa).

FMN contacts are provided by residues 16–18 and Gln70; that span reads PMA. Residue Cys100 is the Proton donor of the active site. Residues Lys139, 200 to 202, and 224 to 225 contribute to the FMN site; these read NGD and GR.

This sequence belongs to the Dus family. DusB subfamily. It depends on FMN as a cofactor.

It catalyses the reaction a 5,6-dihydrouridine in tRNA + NAD(+) = a uridine in tRNA + NADH + H(+). The enzyme catalyses a 5,6-dihydrouridine in tRNA + NADP(+) = a uridine in tRNA + NADPH + H(+). Catalyzes the synthesis of 5,6-dihydrouridine (D), a modified base found in the D-loop of most tRNAs, via the reduction of the C5-C6 double bond in target uridines. This Shigella flexneri protein is tRNA-dihydrouridine synthase B.